The following is a 593-amino-acid chain: Aspartate--tRNA ligase (593 aa).

Glu180 serves as a coordination point for L-aspartate. The tract at residues 204–207 (QIFK) is aspartate. Position 226 (Arg226) interacts with L-aspartate. ATP is bound by residues 226–228 (RDE) and Gln235. Position 453 (His453) interacts with L-aspartate. Position 487 (Glu487) interacts with ATP. Arg494 contributes to the L-aspartate binding site. 539-542 (GLDR) contributes to the ATP binding site.

It belongs to the class-II aminoacyl-tRNA synthetase family. Type 1 subfamily. In terms of assembly, homodimer.

The protein resides in the cytoplasm. It catalyses the reaction tRNA(Asp) + L-aspartate + ATP = L-aspartyl-tRNA(Asp) + AMP + diphosphate. Functionally, catalyzes the attachment of L-aspartate to tRNA(Asp) in a two-step reaction: L-aspartate is first activated by ATP to form Asp-AMP and then transferred to the acceptor end of tRNA(Asp). This chain is Aspartate--tRNA ligase, found in Clostridium botulinum (strain Okra / Type B1).